The primary structure comprises 344 residues: Small ribosomal subunit protein uS3 (344 aa).

The KH type-2 domain maps to 38–106 (LKAALRERLK…EVFIDIQEVH (69 aa)). Positions 217 to 344 (PEPEPRREQR…QKPEGSGENQ (128 aa)) are disordered. Basic and acidic residues-rich tracts occupy residues 219–259 (PEPR…RGDR) and 335–344 (QKPEGSGENQ).

The protein belongs to the universal ribosomal protein uS3 family. In terms of assembly, part of the 30S ribosomal subunit. Forms a tight complex with proteins S10 and S14.

In terms of biological role, binds the lower part of the 30S subunit head. Binds mRNA in the 70S ribosome, positioning it for translation. This chain is Small ribosomal subunit protein uS3, found in Solibacter usitatus (strain Ellin6076).